The chain runs to 250 residues: Indole-3-glycerol phosphate synthase (250 aa).

It belongs to the TrpC family.

The catalysed reaction is 1-(2-carboxyphenylamino)-1-deoxy-D-ribulose 5-phosphate + H(+) = (1S,2R)-1-C-(indol-3-yl)glycerol 3-phosphate + CO2 + H2O. The protein operates within amino-acid biosynthesis; L-tryptophan biosynthesis; L-tryptophan from chorismate: step 4/5. The chain is Indole-3-glycerol phosphate synthase from Picrophilus torridus (strain ATCC 700027 / DSM 9790 / JCM 10055 / NBRC 100828 / KAW 2/3).